The chain runs to 79 residues: ATP synthase subunit c (79 aa).

The next 2 membrane-spanning stretches (helical) occupy residues 11–31 and 53–73; these read MAAAIMMGLAAIGAAIGIGIL and FFIVMGLVDAIPMIAVGLGLY.

The protein belongs to the ATPase C chain family. As to quaternary structure, F-type ATPases have 2 components, F(1) - the catalytic core - and F(0) - the membrane proton channel. F(1) has five subunits: alpha(3), beta(3), gamma(1), delta(1), epsilon(1). F(0) has three main subunits: a(1), b(2) and c(10-14). The alpha and beta chains form an alternating ring which encloses part of the gamma chain. F(1) is attached to F(0) by a central stalk formed by the gamma and epsilon chains, while a peripheral stalk is formed by the delta and b chains.

It localises to the cell inner membrane. Its function is as follows. F(1)F(0) ATP synthase produces ATP from ADP in the presence of a proton or sodium gradient. F-type ATPases consist of two structural domains, F(1) containing the extramembraneous catalytic core and F(0) containing the membrane proton channel, linked together by a central stalk and a peripheral stalk. During catalysis, ATP synthesis in the catalytic domain of F(1) is coupled via a rotary mechanism of the central stalk subunits to proton translocation. Functionally, key component of the F(0) channel; it plays a direct role in translocation across the membrane. A homomeric c-ring of between 10-14 subunits forms the central stalk rotor element with the F(1) delta and epsilon subunits. This chain is ATP synthase subunit c, found in Proteus mirabilis (strain HI4320).